We begin with the raw amino-acid sequence, 585 residues long: Bifunctional purine biosynthesis protein ade10 (585 aa).

In terms of domain architecture, MGS-like spans M1 to S142. IMP-binding positions include S30–T33, R60–T63, C97–N98, and D121–I122. The Proton donor/acceptor; for FAICAR cyclization activity role is filled by K133. Residues R200 to Y201, H260, G308, D331, N423, and R443 each bind 5-amino-1-(5-phospho-beta-D-ribosyl)imidazole-4-carboxamide. H260 functions as the Proton acceptor; for AICAR formyltransferase activity in the catalytic mechanism. Residue I444 coordinates (6R)-10-formyltetrahydrofolate. F534 provides a ligand contact to 5-amino-1-(5-phospho-beta-D-ribosyl)imidazole-4-carboxamide. (6R)-10-formyltetrahydrofolate is bound by residues D539 and S558–V559. R581 serves as a coordination point for 5-amino-1-(5-phospho-beta-D-ribosyl)imidazole-4-carboxamide.

Belongs to the PurH family. In terms of assembly, homodimer.

Its subcellular location is the cytoplasm. The protein localises to the cytosol. The catalysed reaction is (6R)-10-formyltetrahydrofolate + 5-amino-1-(5-phospho-beta-D-ribosyl)imidazole-4-carboxamide = 5-formamido-1-(5-phospho-D-ribosyl)imidazole-4-carboxamide + (6S)-5,6,7,8-tetrahydrofolate. The enzyme catalyses IMP + H2O = 5-formamido-1-(5-phospho-D-ribosyl)imidazole-4-carboxamide. Its pathway is purine metabolism; IMP biosynthesis via de novo pathway; 5-formamido-1-(5-phospho-D-ribosyl)imidazole-4-carboxamide from 5-amino-1-(5-phospho-D-ribosyl)imidazole-4-carboxamide (10-formyl THF route): step 1/1. It functions in the pathway purine metabolism; IMP biosynthesis via de novo pathway; IMP from 5-formamido-1-(5-phospho-D-ribosyl)imidazole-4-carboxamide: step 1/1. In terms of biological role, bifunctional enzyme that catalyzes the last two steps of purine biosynthesis. Acts as a transformylase that incorporates a formyl group to the AMP analog AICAR (5-amino-1-(5-phospho-beta-D-ribosyl)imidazole-4-carboxamide) to produce the intermediate formyl-AICAR (FAICAR). Also catalyzes the cyclization of FAICAR to IMP. The sequence is that of Bifunctional purine biosynthesis protein ade10 (ade10) from Schizosaccharomyces pombe (strain 972 / ATCC 24843) (Fission yeast).